The chain runs to 291 residues: Phosphate import ATP-binding protein PstB (291 aa).

One can recognise an ABC transporter domain in the interval 43–286 (ANVKDLSFWY…PKHAMTEEYI (244 aa)). 75–82 (GASGCGKS) contributes to the ATP binding site.

This sequence belongs to the ABC transporter superfamily. Phosphate importer (TC 3.A.1.7) family. As to quaternary structure, the complex is composed of two ATP-binding proteins (PstB), two transmembrane proteins (PstC and PstA) and a solute-binding protein (PstS).

It is found in the cell inner membrane. It carries out the reaction phosphate(out) + ATP + H2O = ADP + 2 phosphate(in) + H(+). In terms of biological role, part of the ABC transporter complex PstSACB involved in phosphate import. Responsible for energy coupling to the transport system. In Alcaligenes faecalis, this protein is Phosphate import ATP-binding protein PstB.